Reading from the N-terminus, the 118-residue chain is Putative ankyrin repeat protein R747 (118 aa).

The ANK repeat unit spans residues 70–99; the sequence is NCYYLLDYAIMKNDIPVIVTLIEKGANINR.

In Acanthamoeba polyphaga (Amoeba), this protein is Putative ankyrin repeat protein R747.